The primary structure comprises 1807 residues: Atrochrysone carboxylic acid synthase Agnpks1 (1807 aa).

The tract at residues Leu-41–Ala-173 is N-terminal acylcarrier protein transacylase domain (SAT). One can recognise a Ketosynthase family 3 (KS3) domain in the interval Gln-411–Glu-845. Residues Cys-584, His-720, and His-763 each act as for beta-ketoacyl synthase activity in the active site. Residues Phe-946 to Val-1265 form a malonyl-CoA:ACP transacylase (MAT) domain region. Positions Thr-1334–Ala-1653 are product template (PT) domain. The interval His-1338–Glu-1473 is N-terminal hotdog fold. In terms of domain architecture, PKS/mFAS DH spans His-1338 to Ser-1648. The Proton acceptor; for dehydratase activity role is filled by His-1370. The tract at residues Val-1500–Ser-1648 is C-terminal hotdog fold. Asp-1559 (proton donor; for dehydratase activity) is an active-site residue. The 75-residue stretch at Asp-1732–Tyr-1806 folds into the Carrier domain. Ser-1766 is subject to O-(pantetheine 4'-phosphoryl)serine.

It catalyses the reaction holo-[ACP] + 8 malonyl-CoA + 8 H(+) = atrochrysone carboxyl-[ACP] + 8 CO2 + 8 CoA + 2 H2O. Its pathway is secondary metabolite biosynthesis. Its function is as follows. Non-reducing polyketide synthase; part of the gene cluster that mediates the biosynthesis of agnestins, dihydroxy-xanthone metabolites. The pathway begins with the assembly and cyclization of atrochrysone thioester by the non-reducing polyketide synthase Agnpks1. The atrochrysone carboxyl ACP thioesterase AgnL7 then breaks the thioester bond and releases the atrochrysone carboxylic acid as the first enzyme-free intermediate. The decarboxylase AgnL1 then catalyzes the concerted decarboxylation-elimination required to convert atochrysone carboxylic acid into emodin anthrone, which is further oxidized to emodin by the anthrone oxygenase AgnL2. Emodin then undergoes reduction catalyzed by the oxidoreductase AgnL4 to yield the dihydroquinone tautomer which is the substrate for reduction by the short chain dehydrogenase AgnL6 reduction to produce hydroxyketone, followed by AgnL8 dehydration and likely spontaneous autoxidation to chrysophanol. Baeyer-Villiger oxidation by the oxidase AgnL3 leads to monodictyphenone via cleavage of the C-10/C-10a bond of chrysophanol. Alternative cleavage at the C-4a/C-10 bond of chrysophanol also leads to the formation some cephalone F. Further conversion to agnestins A and B, requires reduction to dihydro-monodictyphenone, oxidation to agnestin C probably via an epoxide, and rearrangement to either agnestin A or agnestin B directly, although agnestin A or agnestin B can also interconvert. Within the cluster, AgnR1 is the only unassigned oxidoreductase present which could be involved in this conversion. However, AgnR1 seems not to be involved in this step, and thus genes involved in the proposed oxidation/reduction may be located elsewhere on the genome. Further agnestin A derivatives are probably formed by spontaneous decarboxylations, dehydrations and methanolysis reactions. The protein is Atrochrysone carboxylic acid synthase Agnpks1 of Paecilomyces divaricatus (Penicillium divaricatum).